The following is a 542-amino-acid chain: Putative leucine aminopeptidase 1 (542 aa).

Mn(2+) contacts are provided by K294 and D299. Residue K323 is part of the active site. Mn(2+)-binding residues include D336, D396, and E398. Residue R400 is part of the active site.

It belongs to the peptidase M17 family. Homohexamer (dimer of homotrimers). Mn(2+) is required as a cofactor.

The protein resides in the cytoplasm. The catalysed reaction is Release of an N-terminal amino acid, Xaa-|-Yaa-, in which Xaa is preferably Leu, but may be other amino acids including Pro although not Arg or Lys, and Yaa may be Pro. Amino acid amides and methyl esters are also readily hydrolyzed, but rates on arylamides are exceedingly low.. It carries out the reaction Release of N-terminal proline from a peptide.. Functionally, presumably involved in the processing and regular turnover of intracellular proteins. Catalyzes the removal of unsubstituted N-terminal amino acids from various peptides. This Oryza sativa subsp. japonica (Rice) protein is Putative leucine aminopeptidase 1.